Consider the following 375-residue polypeptide: Mitochondrial phosphate carrier protein 3, mitochondrial (375 aa).

A helical membrane pass occupies residues 76 to 96 (AFYAACTFGGILSCGLTHMTV). 3 Solcar repeats span residues 76–160 (AFYA…FKKT), 173–257 (YKTL…IVEM), and 274–353 (LQLG…FKVF). Topologically, residues 97 to 134 (TPLDLVKCNMQIDPAKYKSISSGFGILLKEQGVKGFFR) are mitochondrial matrix. A helical membrane pass occupies residues 135–154 (GWVPTLLGYSAQGACKFGFY). Residues 155–175 (EYFKKTYSDLAGPEYTAKYKT) are Mitochondrial intermembrane-facing. The chain crosses the membrane as a helical span at residues 176-196 (LIYLAGSASAEIIADIALCPF). Residues 197 to 231 (EAVKVRVQTQPGFARGMSDGFPKFIKSEGYGGLYK) are Mitochondrial matrix-facing. Residues 232-251 (GLAPLWGRQIPYTMMKFASF) form a helical membrane-spanning segment. Residues 252-272 (ETIVEMIYKYAIPNPKSECSK) lie on the Mitochondrial intermembrane side of the membrane. A helical membrane pass occupies residues 273–293 (GLQLGVSFAGGYVAGVFCAIV). Over 294–332 (SHPADNLVSFLNNAKGATVGDAVKKIGMVGLFTRGLPLR) the chain is Mitochondrial matrix. The helical transmembrane segment at 333-353 (IVMIGTLTGAQWGLYDAFKVF) threads the bilayer. The Mitochondrial intermembrane portion of the chain corresponds to 354-375 (VGLPTTGGVAPAPAIAATEAKA).

The protein belongs to the mitochondrial carrier (TC 2.A.29) family. As to expression, expressed in stems, leaves and flowers. Strong expression in vascular tissues.

It localises to the mitochondrion inner membrane. In terms of biological role, transport of phosphate groups from the cytosol to the mitochondrial matrix. Mediates salt stress tolerance through an ATP-dependent pathway and via modulation of the gibberellin metabolism. This chain is Mitochondrial phosphate carrier protein 3, mitochondrial (MPT3), found in Arabidopsis thaliana (Mouse-ear cress).